Consider the following 487-residue polypeptide: Histamine H1 receptor (487 aa).

Over 1–29 (MSLPNSSCLLEDKMCEGNKTTMASPQLMP) the chain is Extracellular. Residues Asn-5 and Asn-18 are each glycosylated (N-linked (GlcNAc...) asparagine). The chain crosses the membrane as a helical span at residues 30 to 50 (LVVVLSTISLVTVGLNLLVLY). Topologically, residues 51–64 (AVRSERKLHTVGNL) are cytoplasmic. Residues 65-89 (YIVSLSVADLIVGAVVMPMNILYLL) traverse the membrane as a helical segment. Residues 90-97 (MSKWSLGR) are Extracellular-facing. A helical membrane pass occupies residues 98-123 (PLCLFWLSMDYVASTASIFSVFILCI). A disulfide bridge connects residues Cys-100 and Cys-180. The histamine site is built by Asp-107 and Thr-112. An important for agonist binding region spans residues 107–112 (DYVAST). The Cytoplasmic portion of the chain corresponds to 124–144 (DRYRSVQQPLRYLKYRTKTRA). Phosphothreonine is present on residues Thr-140 and Thr-142. A helical transmembrane segment spans residues 145–164 (SATILGAWFLSFLWVIPILG). Topologically, residues 165 to 188 (WNHFRQQISVRREDKCETDFYDVT) are extracellular. The helical transmembrane segment at 189–211 (WFKVMTAIINFYLPTLLMLWFYA) threads the bilayer. Asn-198 contacts histamine. Topologically, residues 212 to 416 (KIYKAVQKHC…MNRERKAAKQ (205 aa)) are cytoplasmic. Ser-230 is subject to Phosphoserine. Basic and acidic residues predominate over residues 238 to 261 (KLRPENPKGDAKKPGKESPWEVLK). Residues 238-286 (KLRPENPKGDAKKPGKESPWEVLKRKPKDAGGGSVLKSPSQTPKEMKSP) form a disordered region. Thr-279 carries the post-translational modification Phosphothreonine. 2 positions are modified to phosphoserine: Ser-344 and Ser-347. Positions 345 to 379 (EISEDQMLGDSQSFSRTDSDTTTETAPGKGKLRSG) are disordered. Over residues 353–369 (GDSQSFSRTDSDTTTET) the composition is skewed to polar residues. 3 positions are modified to phosphoserine: Ser-380, Ser-396, and Ser-398. Residues 417–440 (LGFIMAAFILCWIPYFIFFMVIAF) traverse the membrane as a helical segment. The interval 424–428 (FILCW) is important for agonist binding. Tyr-431 is a histamine binding site. Cys-441 and Cys-444 are oxidised to a cystine. The Extracellular segment spans residues 441-446 (CKNCCN). Residues 447-469 (EHLHMFTIWLGYINSTLNPLIYP) traverse the membrane as a helical segment. Topologically, residues 470 to 487 (LCNENFKKTFKRILHIRS) are cytoplasmic.

This sequence belongs to the G-protein coupled receptor 1 family. Post-translationally, phosphorylation at sites in the second and third cytoplasmic loops independently contribute to agonist-induced receptor down-regulation.

It localises to the cell membrane. G-protein-coupled receptor for histamine, a biogenic amine that functions as an immune modulator and a neurotransmitter. Through the H1 receptor, histamine mediates the contraction of smooth muscles and increases capillary permeability due to contraction of terminal venules. Also mediates neurotransmission in the central nervous system and thereby regulates circadian rhythms, emotional and locomotor activities as well as cognitive functions. The polypeptide is Histamine H1 receptor (Pongo pygmaeus (Bornean orangutan)).